The primary structure comprises 754 residues: MNKGQNQVVPPMSQFGGQNPPQLSSIPPIVNPVVVQNRTSPGTPFITNKAKEIYNRRQQEEISSDSEEEESPIEPAKSKYSRDSRDSRDTRDSRKPKKDSRNMLGSLQKTGTEIAYEPAVKFEMILPKVVKPTRPETPLGIYEQYTPILPPVNNNRFNPAAFQHLFAPSSALLYGQSVKMPMQNVYNINLPGPTGGHVAMDKIYENILPGKNVKCGFSTLGERIQMLDYIRQILVSSCDGENISIDSSGGNSLLSYIKLMELNPNFYSTITNNPYKGLPYGLLIYRSCFPIRFEPTNQSVVCAKNSIGLNIRLYALSYAEYYSYKLNNNIYLEYDVWRELMYYEYVKNRIIKSKQSPNFPILYAYFFCPNRNINFFQLKTNCLTRKELLSEEYKKFRQIHEAISNTGTNKIIRPMSMSGQNDKCQLPDEVDPLFRLYSGTTLILITEAPHHNLYQWASRTYETDGIVQRMTSSGFYDEKIWYDILFQIISALYVMQIHGIYIRNMTIEDNVYIKDLKISGKSCGYWKWIIDGIPYYVPNYGYLVMIDSNFKDTRSESSLLDRDCCEREYKIYANNIYSQKYDSNVLNENIFENYRRIINTNAFTKEHTKNNVMRPPESIMRLIELMSNDPEKNLGTVLHKYFRKYLNNRIGTLLRRDTEIPNVRDVTRQFNNGEMAVEVIGDQMYKWCMVSKTNSDGTVEIITRSDSNLDDYIIKDVRIETLKQYSPYENIDQNLDQEVKLDDNPLETYTISSN.

The interval 1 to 110 (MNKGQNQVVP…RNMLGSLQKT (110 aa)) is disordered. Residues 15-25 (FGGQNPPQLSS) show a composition bias toward polar residues. Low complexity predominate over residues 26–35 (IPPIVNPVVV). The span at 36–46 (QNRTSPGTPFI) shows a compositional bias: polar residues. Residues 49 to 60 (KAKEIYNRRQQE) show a composition bias toward basic and acidic residues. Over residues 62–72 (ISSDSEEEESP) the composition is skewed to acidic residues. Basic and acidic residues predominate over residues 76 to 93 (AKSKYSRDSRDSRDTRDS).

It localises to the virion. This is an uncharacterized protein from Acanthamoeba polyphaga mimivirus (APMV).